Reading from the N-terminus, the 84-residue chain is Large ribosomal subunit protein bL27 (84 aa).

The tract at residues 1–20 (MAHKKAGGSTRNGRDSNPKY) is disordered.

The protein belongs to the bacterial ribosomal protein bL27 family.

The sequence is that of Large ribosomal subunit protein bL27 from Francisella philomiragia subsp. philomiragia (strain ATCC 25017 / CCUG 19701 / FSC 153 / O#319-036).